The sequence spans 388 residues: Probable pectin lyase F-1 (388 aa).

A signal peptide spans 1–19; that stretch reads MKTATFSTLLALSASAVNA. A disulfide bridge connects residues Cys80 and Cys103. N-linked (GlcNAc...) asparagine glycosylation occurs at Asn126. The active site involves Arg253. Cysteines 328 and 336 form a disulfide.

This sequence belongs to the polysaccharide lyase 1 family.

Its subcellular location is the secreted. It carries out the reaction Eliminative cleavage of (1-&gt;4)-alpha-D-galacturonan methyl ester to give oligosaccharides with 4-deoxy-6-O-methyl-alpha-D-galact-4-enuronosyl groups at their non-reducing ends.. Pectinolytic enzymes consist of four classes of enzymes: pectin lyase, polygalacturonase, pectin methylesterase and rhamnogalacturonase. Among pectinolytic enzymes, pectin lyase is the most important in depolymerization of pectin, since it cleaves internal glycosidic bonds of highly methylated pectins. In Aspergillus terreus (strain NIH 2624 / FGSC A1156), this protein is Probable pectin lyase F-1 (pelF-1).